We begin with the raw amino-acid sequence, 32 residues long: Cytochrome b6-f complex subunit 7 (32 aa).

A helical transmembrane segment spans residues 5-25 (IFGTAAIFWVLIPAGLLGGAL).

Belongs to the PetM family. In terms of assembly, the 4 large subunits of the cytochrome b6-f complex are cytochrome b6, subunit IV (17 kDa polypeptide, PetD), cytochrome f and the Rieske protein, while the 4 small subunits are PetG, PetL, PetM and PetN. The complex functions as a dimer.

The protein localises to the cellular thylakoid membrane. Functionally, component of the cytochrome b6-f complex, which mediates electron transfer between photosystem II (PSII) and photosystem I (PSI), cyclic electron flow around PSI, and state transitions. In Prochlorococcus marinus (strain SARG / CCMP1375 / SS120), this protein is Cytochrome b6-f complex subunit 7.